Here is a 174-residue protein sequence, read N- to C-terminus: Nascent polypeptide-associated complex subunit alpha (174 aa).

An N-acetylserine modification is found at serine 2. Positions asparagine 14–leucine 78 constitute an NAC-A/B domain. Positions alanine 85–lysine 137 are disordered. The residue at position 93 (serine 93) is a Phosphoserine. The span at alanine 111 to alanine 120 shows a compositional bias: low complexity. Acidic residues predominate over residues alanine 121–alanine 132. The 40-residue stretch at leucine 135–lysine 174 folds into the UBA domain.

This sequence belongs to the NAC-alpha family. In terms of assembly, part of the nascent polypeptide-associated complex (NAC), consisting of EGD2 and either EGD1 or BTT1. NAC associates with ribosomes via EGD1 or BTT1, and with the CCR4-NOT complex.

The protein resides in the cytoplasm. Its subcellular location is the nucleus. Component of the nascent polypeptide-associated complex (NAC), a dynamic component of the ribosomal exit tunnel, protecting the emerging polypeptides from interaction with other cytoplasmic proteins to ensure appropriate nascent protein targeting. The NAC complex also promotes mitochondrial protein import by enhancing productive ribosome interactions with the outer mitochondrial membrane and blocks the inappropriate interaction of ribosomes translating non-secretory nascent polypeptides with translocation sites in the membrane of the endoplasmic reticulum. EGD2 may also be involved in transcription regulation. The chain is Nascent polypeptide-associated complex subunit alpha (EGD2) from Saccharomyces cerevisiae (strain YJM789) (Baker's yeast).